Consider the following 61-residue polypeptide: Photosystem II reaction center X protein (61 aa).

The chain crosses the membrane as a helical span at residues 26–46; that stretch reads IGSFIAAALLIVIPATAFLIF.

Belongs to the PsbX family. Type 2 subfamily. As to quaternary structure, PSII consists of a core antenna complex that captures photons, and an electron transfer chain that converts photonic excitation into a charge separation. PSII forms dimeric complexes.

It is found in the cellular thylakoid membrane. Its function is as follows. Involved in the binding and/or turnover of quinones at the Q(B) site of Photosystem II. The sequence is that of Photosystem II reaction center X protein from Prochlorococcus marinus (strain MIT 9301).